Reading from the N-terminus, the 367-residue chain is MAAVITWALALLSVFATVQARKSFWEYFGQNSQGKGMMGQQQKLAQESLKGSLEQDLYNMNNFLEKLGPLREPGKEPPRLAQDPEGIRKQLQQELEEVSTRLEPYMAAKHQQVGWNLEGLRQQLKPYTVELMEQVGLSVQDLQEQLRMVGKGTKAQLLGGVDEAMSLLQDMQSRVLHHTDRVKELFHPYAERLVTGIGHHVQELHRSVAPHAVASPARLSRCVQTLSHKLTRKAKDLHTSIQRNLDQLRDELSTFIRVSTDGADNRDSLDPQALSDEVRQRLQAFRHDTYLQIAAFTQAIDQETEEIQHQLAPPPPSHSAFAPELGHSDSNKALSRLQSRLDDLWEDIAYGLHDQGHSQNNPEGHSG.

A signal peptide spans 1–20 (MAAVITWALALLSVFATVQA). A Phosphoserine modification is found at S52. Positions 231-255 (TRKAKDLHTSIQRNLDQLRDELSTF) form a coiled coil. A disordered region spans residues 305–332 (EEIQHQLAPPPPSHSAFAPELGHSDSNK).

It belongs to the apolipoprotein A1/A4/E family. As to quaternary structure, interacts with GPIHBP1. Interacts with SORL1; this interaction leads to APOA5 internalization and sorting either to lysosomes and degradation, or to the trans-Golgi network. In terms of processing, phosphorylated by FAM20C in the extracellular medium. As to expression, liver.

The protein resides in the secreted. Its subcellular location is the early endosome. It localises to the late endosome. The protein localises to the golgi apparatus. It is found in the trans-Golgi network. In terms of biological role, minor apolipoprotein mainly associated with HDL and to a lesser extent with VLDL. May also be associated with chylomicrons. Important determinant of plasma triglyceride (TG) levels by both being a potent stimulator of apo-CII lipoprotein lipase (LPL) TG hydrolysis and an inhibitor of the hepatic VLDL-TG production rate (without affecting the VLDL-apoB production rate). Activates poorly lecithin:cholesterol acyltransferase (LCAT) and does not enhance efflux of cholesterol from macrophages. Binds heparin. The protein is Apolipoprotein A-V (Apoa5) of Rattus norvegicus (Rat).